An 81-amino-acid polypeptide reads, in one-letter code: Photosystem I iron-sulfur center (81 aa).

2 consecutive 4Fe-4S ferredoxin-type domains span residues 1–31 (MSHK…MVPW) and 39–68 (IASS…IRVY). Positions 11, 14, 17, 21, 48, 51, 54, and 58 each coordinate [4Fe-4S] cluster.

The cyanobacterial PSI reaction center is composed of one copy each of PsaA,B,C,D,E,F,I,J,K,L,M and X, and forms trimeric complexes. [4Fe-4S] cluster serves as cofactor.

It is found in the cellular thylakoid membrane. It carries out the reaction reduced [plastocyanin] + hnu + oxidized [2Fe-2S]-[ferredoxin] = oxidized [plastocyanin] + reduced [2Fe-2S]-[ferredoxin]. Its function is as follows. Apoprotein for the two 4Fe-4S centers FA and FB of photosystem I (PSI); essential for photochemical activity. FB is the terminal electron acceptor of PSI, donating electrons to ferredoxin. The C-terminus interacts with PsaA/B/D and helps assemble the protein into the PSI complex. Required for binding of PsaD and PsaE to PSI. PSI is a plastocyanin/cytochrome c6-ferredoxin oxidoreductase, converting photonic excitation into a charge separation, which transfers an electron from the donor P700 chlorophyll pair to the spectroscopically characterized acceptors A0, A1, FX, FA and FB in turn. The polypeptide is Photosystem I iron-sulfur center (Rippkaea orientalis (strain PCC 8801 / RF-1) (Cyanothece sp. (strain PCC 8801))).